The primary structure comprises 635 residues: Threonine--tRNA ligase (635 aa).

Residues 1–61 form the TGS domain; that stretch reads MINISFPDGS…EHDCKLRILT (61 aa). A catalytic region spans residues 242 to 533; the sequence is DHRKIGKELD…LIEEYAGKFP (292 aa). Cys333, His384, and His510 together coordinate Zn(2+).

The protein belongs to the class-II aminoacyl-tRNA synthetase family. In terms of assembly, homodimer. The cofactor is Zn(2+).

The protein resides in the cytoplasm. It catalyses the reaction tRNA(Thr) + L-threonine + ATP = L-threonyl-tRNA(Thr) + AMP + diphosphate + H(+). Functionally, catalyzes the attachment of threonine to tRNA(Thr) in a two-step reaction: L-threonine is first activated by ATP to form Thr-AMP and then transferred to the acceptor end of tRNA(Thr). Also edits incorrectly charged L-seryl-tRNA(Thr). The polypeptide is Threonine--tRNA ligase (Rickettsia typhi (strain ATCC VR-144 / Wilmington)).